A 637-amino-acid polypeptide reads, in one-letter code: MWRVCVRRAQSAVPRAGLGDRWAVLKDGPVAPCGSSRAGPGAARFSSGTPSYGVRFLCGWSSGSDTAPRNRLLRQLLGSPGRRSYSLPPHQKVPLPSLSPTMQAGTIARWEKKEGEKINEGDLIAEVETDKATVGFESLEECYMAKILVAEGTRDIPIGSIICITVGKPEDIEAFKNYTLDSAAATTPQAAAPTPAPAPCAAPTAPSAKAPGSSYPPHMQVSAVGEQRLESWKLRLGVHLSERPCLKEIRETAQDSFEVQEEGYLAKILIPEGTRDVPLGAPLCIIVEKQEDIAAFADYRPMEVTSLKPQAPPPVPPPVAAAPPTAQPLAPTPSGLPAGPKGRVFVSPLAKKLAAERGIDLTQVKGTGPEGRIIKKDIDSFVPSKAAPAPAAAMAPPGPRVAPAPAAGVFTDVPISNIRRVIAQRLMQSKQTIPHYYLSIDVNMGEVLLVRKELNKMLEGKGKISVNDFIIKASALACLKVPEANSSWMDTVIRQNHVVDVSVAVSTPAGLITPIVFNAHIKGLETIASDVVSLASKAREGKLQPHEFQGGTFTISNLGMFGIKNFSAIINPPQACILAIGASEDKLIPADNEKGFDVASVMSVTLSCDHRVVDGAVGAQWLAEFKKYLEKPITMLL.

A mitochondrion-targeting transit peptide spans 1–85 (MWRVCVRRAQ…LLGSPGRRSY (85 aa)). Positions 80–100 (PGRRSYSLPPHQKVPLPSLSP) are disordered. The 77-residue stretch at 90 to 166 (HQKVPLPSLS…PIGSIICITV (77 aa)) folds into the Lipoyl-binding 1 domain. At S99 the chain carries Phosphoserine. An N6-lipoyllysine modification is found at K131. 2 disordered regions span residues 189 to 219 (QAAA…PPHM) and 307 to 340 (LKPQ…PAGP). Residues 201-211 (AAPTAPSAKAP) show a composition bias toward low complexity. The Lipoyl-binding 2 domain occupies 218-287 (HMQVSAVGEQ…PLGAPLCIIV (70 aa)). Positions 310 to 321 (QAPPPVPPPVAA) are enriched in pro residues. Positions 322 to 333 (APPTAQPLAPTP) are enriched in low complexity. The Peripheral subunit-binding (PSBD) domain maps to 345 to 382 (FVSPLAKKLAAERGIDLTQVKGTGPEGRIIKKDIDSFV). Residue R451 participates in CoA binding. Position 456 is an N6-acetyllysine (K456). K463 bears the N6-succinyllysine mark. S465 lines the CoA pocket. K537 bears the N6-succinyllysine mark. Residues S556, N557, and G581 each coordinate CoA. Residues H610 and D614 contribute to the active site.

The protein belongs to the 2-oxoacid dehydrogenase family. As to quaternary structure, part of the pyruvate dehydrogenase complex (PDHc) that is a multi-enzyme complex composed of multiple copies of three enzymes, pyruvate dehydrogenase (subunits PDH1A and PDHB, E1 component), dihydrolipoamide acetyltransferase (DLAT, E2 component), and dihydrolipoamide dehydrogenase (DLD, E3 component) to which is added an additional protein the E3-binding protein (PDHX, E3BP). In terms of structural architecture, the E2 and E3BP components assemble into a 60meric central core with icosahedral symmetry. The central core is decorated with E1 and E3 proteins. Currently, two alternative models for the E2:E3BP stoichiometry are considered as being either 48:12 (E2(48)-E3BP(12)) or 40:20 (E2(40)-E3BP(20)). Interacts with PDK2 and PDK3. Interacts with SIRT4. Interacts with PDHB. The cofactor is (R)-lipoate. Post-translationally, delipoylated at Lys-131 by SIRT4, delipoylation decreases the PHD complex activity. Detected at higher levels in cauda epididymal spermatazoa than in caput epididymal spermatazoa (at protein level).

Its subcellular location is the mitochondrion matrix. The enzyme catalyses N(6)-[(R)-dihydrolipoyl]-L-lysyl-[protein] + acetyl-CoA = N(6)-[(R)-S(8)-acetyldihydrolipoyl]-L-lysyl-[protein] + CoA. Its function is as follows. As part of the pyruvate dehydrogenase complex, catalyzes the transfers of an acetyl group to a lipoic acid moiety. The pyruvate dehydrogenase complex, catalyzes the overall conversion of pyruvate to acetyl-CoA and CO(2), and thereby links cytoplasmic glycolysis and the mitochondrial tricarboxylic acid (TCA) cycle. The chain is Dihydrolipoyllysine-residue acetyltransferase component of pyruvate dehydrogenase complex, mitochondrial from Mesocricetus auratus (Golden hamster).